A 740-amino-acid chain; its full sequence is MPDDVGPAEAEVSGAVSESDNEYDETEVTTKDDDDEKMAERSVASEGVETNGDQKKKYDPKDPLRPRRKKARRACYACQRAHLTCGDERPCQRCIKRGLAEACQDGVRKKAKYLHDAPPEALRPVLGPNYNPAAAVSVRNGHRHPSNAGSDAGSSIGTFYSQSTQYPVFSSAATQLGSIPENLPFPQQSPVSPTFQPSSNPQLGSIGVSSVSSPMNSFPPALFDPSNPAIFNFNLEGLNFGSQYGAMEFGMLGHMSSGAAETPPRDPSMAQQGTSDVGFNPSGVFGNGLNQFEKVYDNNTGLISDFLTLDAHSNGLYSQGNLQHGLPHAYAIPAGPTSLQSPSTENNSPQPTGFGFESPTATNYTGVPGAAGNQPGSQQPRAQKPKTPALGKLGPQSVLGKRQRDPSSIYEAVKEPFQYVASFHKLISLLQNRFSGASTISIVRSLASIRPSFMSCMKTLNRADLIFMEKSFQRALFEHEEFMHQSPSPAIACRRTGEIAAVNKEFTALTGWTKDVLLGKTLNLNANMGGTNSDTLSISSKGGRGGIVGTTPRLKPLHPEQGTNADSQQQQSQQHKEQPQPVFLAELMDEASVTQFYEDYAQLAFTHSRGTVVRKCRLLKYRTQENMDAAAAAAAAASAPTASGGSGSSNGTVVNGGPDSSPAGKTEKERPTGVNVASNSILSNRVAKIDGEHGISKLERDGKLECSYTWTIKRDVFDIPMIIMINFLPCYYRSHNQLAV.

Residues Met1–Pro66 are disordered. Residues Ser19–Lys37 are compositionally biased toward acidic residues. A compositionally biased stretch (basic and acidic residues) spans Gly52–Arg65. The zn(2)-C6 fungal-type DNA-binding region spans Cys75 to Cys103. 3 disordered regions span residues Pro333 to Asp405, Asn532 to Pro579, and Ala639 to Val674. A compositionally biased stretch (polar residues) spans Thr337–Pro351. Positions Ala475–Gly546 constitute a PAS domain. Positions Ala639–Pro658 are enriched in low complexity.

It belongs to the ERT1/acuK family.

The protein resides in the nucleus. In terms of biological role, transcription factor which regulates nonfermentable carbon utilization. Activator of gluconeogenetic genes. The sequence is that of Transcription activator of gluconeogenesis NCU03938 from Neurospora crassa (strain ATCC 24698 / 74-OR23-1A / CBS 708.71 / DSM 1257 / FGSC 987).